Consider the following 288-residue polypeptide: Elongation factor Ts (288 aa).

The interval 82 to 85 (TDFV) is involved in Mg(2+) ion dislocation from EF-Tu.

This sequence belongs to the EF-Ts family.

It is found in the cytoplasm. Functionally, associates with the EF-Tu.GDP complex and induces the exchange of GDP to GTP. It remains bound to the aminoacyl-tRNA.EF-Tu.GTP complex up to the GTP hydrolysis stage on the ribosome. This is Elongation factor Ts from Chlorobium phaeobacteroides (strain BS1).